The primary structure comprises 87 residues: Large ribosomal subunit protein bL27 (87 aa).

The tract at residues 1–22 (MAHKKAGGSSRNGRDSQGQRRG) is disordered.

This sequence belongs to the bacterial ribosomal protein bL27 family.

The polypeptide is Large ribosomal subunit protein bL27 (Nitratidesulfovibrio vulgaris (strain DP4) (Desulfovibrio vulgaris)).